A 401-amino-acid polypeptide reads, in one-letter code: Tryptophan synthase beta chain (401 aa).

An N6-(pyridoxal phosphate)lysine modification is found at Lys-92.

Belongs to the TrpB family. As to quaternary structure, tetramer of two alpha and two beta chains. It depends on pyridoxal 5'-phosphate as a cofactor.

It carries out the reaction (1S,2R)-1-C-(indol-3-yl)glycerol 3-phosphate + L-serine = D-glyceraldehyde 3-phosphate + L-tryptophan + H2O. Its pathway is amino-acid biosynthesis; L-tryptophan biosynthesis; L-tryptophan from chorismate: step 5/5. Functionally, the beta subunit is responsible for the synthesis of L-tryptophan from indole and L-serine. This is Tryptophan synthase beta chain from Vesicomyosocius okutanii subsp. Calyptogena okutanii (strain HA).